A 320-amino-acid polypeptide reads, in one-letter code: tRNA dimethylallyltransferase (320 aa).

5–12 (GPTAVGKS) serves as a coordination point for ATP. Position 7 to 12 (7 to 12 (TAVGKS)) interacts with substrate. The interaction with substrate tRNA stretch occupies residues 30–33 (DSMQ).

The protein belongs to the IPP transferase family. As to quaternary structure, monomer. Mg(2+) serves as cofactor.

The enzyme catalyses adenosine(37) in tRNA + dimethylallyl diphosphate = N(6)-dimethylallyladenosine(37) in tRNA + diphosphate. Catalyzes the transfer of a dimethylallyl group onto the adenine at position 37 in tRNAs that read codons beginning with uridine, leading to the formation of N6-(dimethylallyl)adenosine (i(6)A). This is tRNA dimethylallyltransferase from Heliobacterium modesticaldum (strain ATCC 51547 / Ice1).